The following is a 359-amino-acid chain: Cytoplasmic tRNA 2-thiolation protein 1 (359 aa).

Belongs to the TtcA family. CTU1/NCS6/ATPBD3 subfamily. Interacts with NCS2 and URM1. May act by forming a heterodimer with NCS2. Component of a large molecular weight complex of more than 250 kDa.

The protein localises to the cytoplasm. It localises to the mitochondrion. It functions in the pathway tRNA modification; 5-methoxycarbonylmethyl-2-thiouridine-tRNA biosynthesis. In terms of biological role, plays a central role in 2-thiolation of mcm(5)S(2)U at tRNA wobble positions of tRNA(Lys), tRNA(Glu) and tRNA(Gln). Directly binds tRNAs and probably acts by catalyzing adenylation of tRNAs, an intermediate required for 2-thiolation. It is unclear whether it acts as a sulfurtransferase that transfers sulfur from thiocarboxylated URM1 onto the uridine of tRNAs at wobble position. Prior mcm(5) tRNA modification by the elongator complex is required for 2-thiolation. May also be involved in protein urmylation. The chain is Cytoplasmic tRNA 2-thiolation protein 1 from Saccharomyces cerevisiae (strain RM11-1a) (Baker's yeast).